The chain runs to 784 residues: DNA ligase (784 aa).

Residues 31–35 (DAEYD), 80–81 (SL), and E120 contribute to the NAD(+) site. Residue K122 is the N6-AMP-lysine intermediate of the active site. Residues R143, E180, K296, and K320 each contribute to the NAD(+) site. The Zn(2+) site is built by C414, C417, C444, and C450. One can recognise a BRCT domain in the interval 701-784 (AEGLPLAGQT…AFMAEQGITL (84 aa)).

Belongs to the NAD-dependent DNA ligase family. LigA subfamily. Requires Mg(2+) as cofactor. It depends on Mn(2+) as a cofactor.

It catalyses the reaction NAD(+) + (deoxyribonucleotide)n-3'-hydroxyl + 5'-phospho-(deoxyribonucleotide)m = (deoxyribonucleotide)n+m + AMP + beta-nicotinamide D-nucleotide.. Functionally, DNA ligase that catalyzes the formation of phosphodiester linkages between 5'-phosphoryl and 3'-hydroxyl groups in double-stranded DNA using NAD as a coenzyme and as the energy source for the reaction. It is essential for DNA replication and repair of damaged DNA. This Pseudomonas entomophila (strain L48) protein is DNA ligase.